Reading from the N-terminus, the 168-residue chain is Photosystem I assembly protein Ycf3 (168 aa).

3 TPR repeats span residues 35-68, 72-105, and 120-153; these read AFAYYINGMSAQSEGNYAEALQNYYQAMHLEMDP, SYILYNIGIIHTSNGEHSKALEYYCRAIERNPFL, and GEQAIQQGDSEIAEAWFDQAAEYWKQARTLTPDN.

Belongs to the Ycf3 family.

The protein resides in the plastid membrane. Essential for the assembly of the photosystem I (PSI) complex. May act as a chaperone-like factor to guide the assembly of the PSI subunits. The chain is Photosystem I assembly protein Ycf3 from Cuscuta obtusiflora (Peruvian dodder).